A 172-amino-acid chain; its full sequence is Acidic proline-rich protein PRP25 (172 aa).

An N-terminal signal peptide occupies residues 1 to 16 (MLVVLFTAVLLTLSYA). The tract at residues 22–172 (ELQILDQTPN…QQGPPPPGGP (151 aa)) is disordered. Pro residues predominate over residues 32–44 (QKPPPPGFPPRPP). Residues 57 to 67 (GPQQSPLQPGK) are compositionally biased toward low complexity. Composition is skewed to pro residues over residues 68–137 (PQDP…PQQK) and 145–172 (QGPPPPGGPQQKPPQPGNQQGPPPPGGP).

The protein localises to the secreted. This is Acidic proline-rich protein PRP25 from Rattus norvegicus (Rat).